The following is a 199-amino-acid chain: Holliday junction branch migration complex subunit RuvA (199 aa).

A domain I region spans residues 1–64; sequence MIAKLTGRLD…EDFLRLLGFA (64 aa). Residues 65-143 are domain II; the sequence is RAEERDWFRL…ALGGISGSGP (79 aa). The tract at residues 144-146 is flexible linker; it reads ALS. The interval 147–199 is domain III; sequence AAAGPVGDAIAALTGLGFKPGEASAAVAAANEELGADASLDALVRVALKKAAK.

Belongs to the RuvA family. In terms of assembly, homotetramer. Forms an RuvA(8)-RuvB(12)-Holliday junction (HJ) complex. HJ DNA is sandwiched between 2 RuvA tetramers; dsDNA enters through RuvA and exits via RuvB. An RuvB hexamer assembles on each DNA strand where it exits the tetramer. Each RuvB hexamer is contacted by two RuvA subunits (via domain III) on 2 adjacent RuvB subunits; this complex drives branch migration. In the full resolvosome a probable DNA-RuvA(4)-RuvB(12)-RuvC(2) complex forms which resolves the HJ.

It localises to the cytoplasm. Functionally, the RuvA-RuvB-RuvC complex processes Holliday junction (HJ) DNA during genetic recombination and DNA repair, while the RuvA-RuvB complex plays an important role in the rescue of blocked DNA replication forks via replication fork reversal (RFR). RuvA specifically binds to HJ cruciform DNA, conferring on it an open structure. The RuvB hexamer acts as an ATP-dependent pump, pulling dsDNA into and through the RuvAB complex. HJ branch migration allows RuvC to scan DNA until it finds its consensus sequence, where it cleaves and resolves the cruciform DNA. In Sphingopyxis alaskensis (strain DSM 13593 / LMG 18877 / RB2256) (Sphingomonas alaskensis), this protein is Holliday junction branch migration complex subunit RuvA.